The primary structure comprises 461 residues: D-phenylhydantoinase (461 aa).

His-59, His-61, and Lys-151 together coordinate a divalent metal cation. Lys-151 is subject to N6-carboxylysine. Tyr-156 serves as a coordination point for substrate. A divalent metal cation is bound by residues His-182 and His-239. Substrate is bound at residue Ser-286. Asp-313 provides a ligand contact to a divalent metal cation. Asn-335 contacts substrate.

It belongs to the metallo-dependent hydrolases superfamily. Hydantoinase/dihydropyrimidinase family. Homotetramer. Requires a divalent metal cation as cofactor. Post-translationally, carboxylation allows a single lysine to coordinate two divalent metal cations.

The catalysed reaction is D-5-phenylhydantoin + H2O = N-carbamoyl-D-phenylglycine + H(+). Functionally, catalyzes the stereospecific hydrolysis of the cyclic amide bond of D-hydantoin derivatives with an aromatic side chains at the 5'-position. Has no activity on dihydropyrimidines. The physiological function is unknown. This chain is D-phenylhydantoinase, found in Escherichia coli O9:H4 (strain HS).